The chain runs to 265 residues: Small ribosomal subunit protein uS3 (265 aa).

A KH type-2 domain is found at 43–111; that stretch reads IRTMLKTSLD…QIQLNILEVK (69 aa). The tract at residues 217–265 is disordered; the sequence is AREQANQKSSRPERRNDRSDGRTGDRRTNAPRTAPAAEAAPVAAAGVEA. The span at 226-244 shows a compositional bias: basic and acidic residues; sequence SRPERRNDRSDGRTGDRRT. Over residues 250–265 the composition is skewed to low complexity; the sequence is APAAEAAPVAAAGVEA.

It belongs to the universal ribosomal protein uS3 family. In terms of assembly, part of the 30S ribosomal subunit. Forms a tight complex with proteins S10 and S14.

Its function is as follows. Binds the lower part of the 30S subunit head. Binds mRNA in the 70S ribosome, positioning it for translation. The polypeptide is Small ribosomal subunit protein uS3 (Clavibacter michiganensis subsp. michiganensis (strain NCPPB 382)).